The sequence spans 546 residues: Chaperonin GroEL (546 aa).

Residues 30-33 (TLGP), lysine 51, 87-91 (DGTTT), glycine 415, 479-481 (NAA), and aspartate 495 contribute to the ATP site. The tract at residues 526–546 (KEDAPMPGGMPGGMGGMGMDM) is disordered. The span at 534-546 (GMPGGMGGMGMDM) shows a compositional bias: gly residues.

Belongs to the chaperonin (HSP60) family. As to quaternary structure, forms a cylinder of 14 subunits composed of two heptameric rings stacked back-to-back. Interacts with the co-chaperonin GroES.

It is found in the cytoplasm. The catalysed reaction is ATP + H2O + a folded polypeptide = ADP + phosphate + an unfolded polypeptide.. Its function is as follows. Together with its co-chaperonin GroES, plays an essential role in assisting protein folding. The GroEL-GroES system forms a nano-cage that allows encapsulation of the non-native substrate proteins and provides a physical environment optimized to promote and accelerate protein folding. The polypeptide is Chaperonin GroEL (Burkholderia cepacia (Pseudomonas cepacia)).